The following is a 57-amino-acid chain: Andropin (57 aa).

The signal sequence occupies residues 1-23 (MKYFVVLVVLALILAITVDPSDA).

It belongs to the andropin family. Ejaculatory duct of adult males.

Its subcellular location is the secreted. Its function is as follows. Male-specific peptide with moderate activity against Gram-positive bacteria. The sequence is that of Andropin (Anp) from Drosophila sechellia (Fruit fly).